A 645-amino-acid polypeptide reads, in one-letter code: Threonine--tRNA ligase (645 aa).

The TGS domain occupies methionine 1 to threonine 61. The interval aspartate 242 to proline 541 is catalytic. 3 residues coordinate Zn(2+): cysteine 337, histidine 388, and histidine 518.

This sequence belongs to the class-II aminoacyl-tRNA synthetase family. As to quaternary structure, homodimer. The cofactor is Zn(2+).

It is found in the cytoplasm. It carries out the reaction tRNA(Thr) + L-threonine + ATP = L-threonyl-tRNA(Thr) + AMP + diphosphate + H(+). Its function is as follows. Catalyzes the attachment of threonine to tRNA(Thr) in a two-step reaction: L-threonine is first activated by ATP to form Thr-AMP and then transferred to the acceptor end of tRNA(Thr). Also edits incorrectly charged L-seryl-tRNA(Thr). This chain is Threonine--tRNA ligase, found in Cytophaga hutchinsonii (strain ATCC 33406 / DSM 1761 / CIP 103989 / NBRC 15051 / NCIMB 9469 / D465).